The primary structure comprises 79 residues: D-alanyl carrier protein (79 aa).

One can recognise a Carrier domain in the interval 1 to 77 (MSTKETVIDL…KIIQGIEELQ (77 aa)). Position 35 is an O-(pantetheine 4'-phosphoryl)serine (serine 35).

It belongs to the DltC family. Post-translationally, 4'-phosphopantetheine is transferred from CoA to a specific serine of apo-DCP.

It localises to the cytoplasm. Its pathway is cell wall biogenesis; lipoteichoic acid biosynthesis. Its function is as follows. Carrier protein involved in the D-alanylation of lipoteichoic acid (LTA). The loading of thioester-linked D-alanine onto DltC is catalyzed by D-alanine--D-alanyl carrier protein ligase DltA. The DltC-carried D-alanyl group is further transferred to cell membrane phosphatidylglycerol (PG) by forming an ester bond, probably catalyzed by DltD. D-alanylation of LTA plays an important role in modulating the properties of the cell wall in Gram-positive bacteria, influencing the net charge of the cell wall. The protein is D-alanyl carrier protein of Streptococcus equi subsp. equi (strain 4047).